We begin with the raw amino-acid sequence, 479 residues long: Glycogen synthase (479 aa).

Lysine 15 lines the ADP-alpha-D-glucose pocket.

Belongs to the glycosyltransferase 1 family. Bacterial/plant glycogen synthase subfamily.

It catalyses the reaction [(1-&gt;4)-alpha-D-glucosyl](n) + ADP-alpha-D-glucose = [(1-&gt;4)-alpha-D-glucosyl](n+1) + ADP + H(+). Its pathway is glycan biosynthesis; glycogen biosynthesis. Synthesizes alpha-1,4-glucan chains using ADP-glucose. This Acidiphilium cryptum (strain JF-5) protein is Glycogen synthase.